The chain runs to 571 residues: Quinone-dependent D-lactate dehydrogenase (571 aa).

Residues 42-213 (GQGDALAVVF…SKLDDDRIKD (172 aa)) enclose the FAD-binding PCMH-type domain. Residues 76-80 (AANTG), 84-85 (GS), glycine 143, serine 150, glycine 160, and valine 262 each bind FAD. Positions 546–571 (RENDPTNSMNPGIGKTSKRKNWQEVE) are disordered.

The protein belongs to the quinone-dependent D-lactate dehydrogenase family. FAD serves as cofactor.

The protein resides in the cell inner membrane. It carries out the reaction (R)-lactate + a quinone = a quinol + pyruvate. Inhibited by 2-hydroxy-3-butynoic acid, but not by p-chloromercuribenzoate, n-ethylmaleimide, or 5,5'-dithiobis(2-nitrobenzoic acid). In terms of biological role, catalyzes the oxidation of D-lactate to pyruvate. Electrons derived from D-lactate oxidation are transferred to the ubiquinone/cytochrome electron transfer chain, where they may be used to provide energy for the active transport of a variety of amino acids and sugars across the membrane. This Escherichia coli (strain K12) protein is Quinone-dependent D-lactate dehydrogenase.